A 745-amino-acid polypeptide reads, in one-letter code: Cysteine protease atg4 (745 aa).

Low complexity-rich tracts occupy residues 29 to 42, 52 to 64, and 194 to 215; these read QQSYLRQQQQAPQQ, SPTSSSSTPSSST, and NNNSNSNNNNNHNNNHNNNNNN. Disordered stretches follow at residues 29 to 68 and 192 to 215; these read QQSYLRQQQQAPQQISYGFNQPNSPTSSSSTPSSSTAMGN and FQNNNSNSNNNNNHNNNHNNNNNN. The active-site Nucleophile is the Cys262. Disordered stretches follow at residues 344-363 and 439-480; these read LNRGGGGSSKGKKKKEKEEE and QNNN…NGYN. Positions 439–477 are enriched in low complexity; it reads QNNNKNNNNNNPTTTTTTTTTATSSNNNNNQSPPSRVPN. Residues Asp562 and His564 contribute to the active site. The disordered stretch occupies residues 686–745; it reads HIPYNPNNNQNNNQNNNNNNNKNNNNNTNQQQTPNYPPKLNTYQPDFSSDGEIDDFTMVG. Residues 688-719 are compositionally biased toward low complexity; the sequence is PYNPNNNQNNNQNNNNNNNKNNNNNTNQQQTP. Residues 734 to 745 show a composition bias toward acidic residues; the sequence is SDGEIDDFTMVG.

Belongs to the peptidase C54 family.

Its subcellular location is the cytoplasm. It catalyses the reaction [protein]-C-terminal L-amino acid-glycyl-phosphatidylethanolamide + H2O = [protein]-C-terminal L-amino acid-glycine + a 1,2-diacyl-sn-glycero-3-phosphoethanolamine. Its function is as follows. Cysteine protease that plays a key role in autophagy by mediating both proteolytic activation and delipidation of ATG8 family proteins. The protease activity is required for proteolytic activation of ATG8 family proteins: cleaves the C-terminal amino acid of ATG8 proteins to reveal a C-terminal glycine. Exposure of the glycine at the C-terminus is essential for ATG8 proteins conjugation to phosphatidylethanolamine (PE) and insertion to membranes, which is necessary for autophagy. In addition to the protease activity, also mediates delipidation of PE-conjugated ATG8 proteins. The protein is Cysteine protease atg4 (atg4-1) of Dictyostelium discoideum (Social amoeba).